The following is a 324-amino-acid chain: R2-like ligand binding oxidase (324 aa).

E79, E112, and H115 together coordinate Mn(2+). Positions 82–173 (VTEDIQPFMK…VNQVRASVTY (92 aa)) form a cross-link, 3-(O4'-tyrosyl)-valine (Val-Tyr). E112 lines the Fe cation pocket. Positions 178, 213, and 216 each coordinate Fe cation. The segment at 304 to 324 (PEALEEKFGEEDAKAMSEAAG) is disordered. The segment covering 307 to 318 (LEEKFGEEDAKA) has biased composition (basic and acidic residues).

It belongs to the ribonucleoside diphosphate reductase small chain family. R2-like ligand binding oxidase subfamily. As to quaternary structure, homodimer. Requires Fe cation as cofactor. Mn(2+) serves as cofactor.

Probable oxidase. The chain is R2-like ligand binding oxidase from Rhodococcus jostii (strain RHA1).